Consider the following 468-residue polypeptide: ATP synthase subunit beta (468 aa).

Residue 155–162 (GGAGVGKT) participates in ATP binding.

This sequence belongs to the ATPase alpha/beta chains family. In terms of assembly, F-type ATPases have 2 components, CF(1) - the catalytic core - and CF(0) - the membrane proton channel. CF(1) has five subunits: alpha(3), beta(3), gamma(1), delta(1), epsilon(1). CF(0) has three main subunits: a(1), b(2) and c(9-12). The alpha and beta chains form an alternating ring which encloses part of the gamma chain. CF(1) is attached to CF(0) by a central stalk formed by the gamma and epsilon chains, while a peripheral stalk is formed by the delta and b chains.

Its subcellular location is the cell membrane. The catalysed reaction is ATP + H2O + 4 H(+)(in) = ADP + phosphate + 5 H(+)(out). Functionally, produces ATP from ADP in the presence of a proton gradient across the membrane. The catalytic sites are hosted primarily by the beta subunits. This is ATP synthase subunit beta from Bacillus cereus (strain G9842).